The sequence spans 477 residues: Bifunctional protein HldE (477 aa).

Residues 1–318 form a ribokinase region; sequence MKVTLPDFRR…ENAIRGRADT (318 aa). 195–198 is an ATP binding site; that stretch reads NLSE. D264 is an active-site residue. The interval 344 to 477 is cytidylyltransferase; it reads MTNGVFDILH…INIIRQGQND (134 aa).

It in the N-terminal section; belongs to the carbohydrate kinase PfkB family. This sequence in the C-terminal section; belongs to the cytidylyltransferase family. In terms of assembly, homodimer.

It catalyses the reaction D-glycero-beta-D-manno-heptose 7-phosphate + ATP = D-glycero-beta-D-manno-heptose 1,7-bisphosphate + ADP + H(+). The catalysed reaction is D-glycero-beta-D-manno-heptose 1-phosphate + ATP + H(+) = ADP-D-glycero-beta-D-manno-heptose + diphosphate. It functions in the pathway nucleotide-sugar biosynthesis; ADP-L-glycero-beta-D-manno-heptose biosynthesis; ADP-L-glycero-beta-D-manno-heptose from D-glycero-beta-D-manno-heptose 7-phosphate: step 1/4. Its pathway is nucleotide-sugar biosynthesis; ADP-L-glycero-beta-D-manno-heptose biosynthesis; ADP-L-glycero-beta-D-manno-heptose from D-glycero-beta-D-manno-heptose 7-phosphate: step 3/4. Functionally, catalyzes the phosphorylation of D-glycero-D-manno-heptose 7-phosphate at the C-1 position to selectively form D-glycero-beta-D-manno-heptose-1,7-bisphosphate. Its function is as follows. Catalyzes the ADP transfer from ATP to D-glycero-beta-D-manno-heptose 1-phosphate, yielding ADP-D-glycero-beta-D-manno-heptose. The chain is Bifunctional protein HldE from Edwardsiella ictaluri (strain 93-146).